The following is a 248-amino-acid chain: DNA polymerase sliding clamp (248 aa).

Belongs to the PCNA family. As to quaternary structure, homotrimer. The subunits circularize to form a toroid; DNA passes through its center. Replication factor C (RFC) is required to load the toroid on the DNA.

Functionally, sliding clamp subunit that acts as a moving platform for DNA processing. Responsible for tethering the catalytic subunit of DNA polymerase and other proteins to DNA during high-speed replication. The chain is DNA polymerase sliding clamp from Cenarchaeum symbiosum (strain A).